Consider the following 217-residue polypeptide: Probable transaldolase (217 aa).

Catalysis depends on lysine 83, which acts as the Schiff-base intermediate with substrate.

It belongs to the transaldolase family. Type 3B subfamily.

The protein localises to the cytoplasm. The catalysed reaction is D-sedoheptulose 7-phosphate + D-glyceraldehyde 3-phosphate = D-erythrose 4-phosphate + beta-D-fructose 6-phosphate. Its pathway is carbohydrate degradation; pentose phosphate pathway; D-glyceraldehyde 3-phosphate and beta-D-fructose 6-phosphate from D-ribose 5-phosphate and D-xylulose 5-phosphate (non-oxidative stage): step 2/3. Its function is as follows. Transaldolase is important for the balance of metabolites in the pentose-phosphate pathway. This is Probable transaldolase from Novosphingobium aromaticivorans (strain ATCC 700278 / DSM 12444 / CCUG 56034 / CIP 105152 / NBRC 16084 / F199).